The chain runs to 935 residues: UvrABC system protein A (935 aa).

An ATP-binding site is contributed by 31-38 (GLSGSGKS). A C4-type zinc finger spans residues 254–281 (CFKCKMSFEELEPLSFSFNSPKGACESC). 2 ABC transporter domains span residues 310 to 579 (IFGY…NNHS) and 599 to 931 (KEKH…KFLA). ATP is bound at residue 631–638 (GVSGSGKS). A C4-type zinc finger spans residues 731–757 (CEKCQGDGDIKIEMHFLPDVLVQCDSC).

The protein belongs to the ABC transporter superfamily. UvrA family. In terms of assembly, forms a heterotetramer with UvrB during the search for lesions.

It is found in the cytoplasm. In terms of biological role, the UvrABC repair system catalyzes the recognition and processing of DNA lesions. UvrA is an ATPase and a DNA-binding protein. A damage recognition complex composed of 2 UvrA and 2 UvrB subunits scans DNA for abnormalities. When the presence of a lesion has been verified by UvrB, the UvrA molecules dissociate. The chain is UvrABC system protein A from Helicobacter pylori (strain ATCC 700392 / 26695) (Campylobacter pylori).